An 813-amino-acid polypeptide reads, in one-letter code: MEEYNKAVEEFRKHEYPMLKDAVYLDHAGTTLYSKSLMERYMGDMMSNLYGNPHSASTSSQLSTSRIENTRLNVLQFFNADPEDFDVVFVANATAGIKLVMDAFRCQEDGFLYGYHQDSHTSLVGVREDAVSSRCLDDDAVECWLSGSEALVRNEHNSEIGLFAYPAQSNLDGRRLPLSWPERVRNLSYEAQANTYTLLDASALVSTSPLDLSDVSKAPDFTVLSFYKIFGFPDLGALIVRKDSGAILQTRKYFGGGTVEVVVCLKEQWHAPKGQSLHENLEDGTLPFHNIMALEAAIDVHKSLYGSMECIANHTTFLARKLYEGLKSLQHANSEPACIIYSPGFSETSSNVQGPTIAFNVKNSFGAWVTNVEFERLASIKNYHIRTGGLCNPGGVASALELQPWETRRNFSAGLRCGGETDIYAGKITGVIRVSLGAMSTMSDVDSFLSFVNEFFVDHTVVSADEDGESQKSVDMYVESLTIYPIKSCGGFEIPKETAWEVRPEGLAWDREWCLIHQGTGQALSQKRYPRMALIKPTIDFDLGLLKLRYQGSTFPTLVDEISVSLSSDPSSYKNPNNIHSLSSRVCGDAIAAQTYFDHEINDFFSKILEAPCVLARFPAGGSGPSLRHAKAHMQKHQGPKRSAAIEKSSAHSFHDPPTPPDSDSENRKRPILLSNESPILAINRSSINMLNEEIAKSGGKLASASVFRGNIVLASTELTDSHHPYSEDHWSTLQIGSETYQMLGSCRRCHMICVDQDTAEKNEEPFVTLAKTRRFESKVFFGSHMCHVPSFSRHKKHQFPVIKVGDKVSIGL.

Lysine 228 carries the N6-(pyridoxal phosphate)lysine modification. Cysteine 391 is a catalytic residue. A disordered region spans residues 625–670 (PSLRHAKAHMQKHQGPKRSAAIEKSSAHSFHDPPTPPDSDSENRKR). Positions 628–640 (RHAKAHMQKHQGP) are enriched in basic residues. An MOSC domain is found at 648-812 (KSSAHSFHDP…IKVGDKVSIG (165 aa)).

It belongs to the class-V pyridoxal-phosphate-dependent aminotransferase family. MOCOS subfamily. The cofactor is pyridoxal 5'-phosphate.

The catalysed reaction is Mo-molybdopterin + L-cysteine + AH2 = thio-Mo-molybdopterin + L-alanine + A + H2O. Its function is as follows. Sulfurates the molybdenum cofactor. Sulfation of molybdenum is essential for xanthine dehydrogenase (XDH) and aldehyde oxidase (ADO) enzymes in which molybdenum cofactor is liganded by 1 oxygen and 1 sulfur atom in active form. This chain is Molybdenum cofactor sulfurase, found in Botryotinia fuckeliana (strain B05.10) (Noble rot fungus).